The chain runs to 420 residues: Histidine--tRNA ligase (420 aa).

It belongs to the class-II aminoacyl-tRNA synthetase family. As to quaternary structure, homodimer.

The protein localises to the cytoplasm. The catalysed reaction is tRNA(His) + L-histidine + ATP = L-histidyl-tRNA(His) + AMP + diphosphate + H(+). In Thermotoga sp. (strain RQ2), this protein is Histidine--tRNA ligase.